The primary structure comprises 243 residues: 1-(5-phosphoribosyl)-5-[(5-phosphoribosylamino)methylideneamino] imidazole-4-carboxamide isomerase (243 aa).

Residue D9 is the Proton acceptor of the active site. The active-site Proton donor is the D131.

The protein belongs to the HisA/HisF family.

The protein localises to the cytoplasm. The catalysed reaction is 1-(5-phospho-beta-D-ribosyl)-5-[(5-phospho-beta-D-ribosylamino)methylideneamino]imidazole-4-carboxamide = 5-[(5-phospho-1-deoxy-D-ribulos-1-ylimino)methylamino]-1-(5-phospho-beta-D-ribosyl)imidazole-4-carboxamide. It functions in the pathway amino-acid biosynthesis; L-histidine biosynthesis; L-histidine from 5-phospho-alpha-D-ribose 1-diphosphate: step 4/9. The polypeptide is 1-(5-phosphoribosyl)-5-[(5-phosphoribosylamino)methylideneamino] imidazole-4-carboxamide isomerase (Campylobacter jejuni (strain RM1221)).